Here is a 301-residue protein sequence, read N- to C-terminus: Formamidopyrimidine-DNA glycosylase (301 aa).

P2 (schiff-base intermediate with DNA) is an active-site residue. Catalysis depends on E3, which acts as the Proton donor. K58 acts as the Proton donor; for beta-elimination activity in catalysis. DNA-binding residues include H109, R131, and K174. Residues 265-301 (SVYDREGQACRTPGCGGTVARIVQAGRSTFYCATCQK) form an FPG-type zinc finger. Catalysis depends on R291, which acts as the Proton donor; for delta-elimination activity.

This sequence belongs to the FPG family. Monomer. It depends on Zn(2+) as a cofactor.

It carries out the reaction Hydrolysis of DNA containing ring-opened 7-methylguanine residues, releasing 2,6-diamino-4-hydroxy-5-(N-methyl)formamidopyrimidine.. It catalyses the reaction 2'-deoxyribonucleotide-(2'-deoxyribose 5'-phosphate)-2'-deoxyribonucleotide-DNA = a 3'-end 2'-deoxyribonucleotide-(2,3-dehydro-2,3-deoxyribose 5'-phosphate)-DNA + a 5'-end 5'-phospho-2'-deoxyribonucleoside-DNA + H(+). In terms of biological role, involved in base excision repair of DNA damaged by oxidation or by mutagenic agents. Acts as a DNA glycosylase that recognizes and removes damaged bases. Has a preference for oxidized purines, such as 7,8-dihydro-8-oxoguanine (8-oxoG). Has AP (apurinic/apyrimidinic) lyase activity and introduces nicks in the DNA strand. Cleaves the DNA backbone by beta-delta elimination to generate a single-strand break at the site of the removed base with both 3'- and 5'-phosphates. This Rhizobium leguminosarum bv. trifolii (strain WSM2304) protein is Formamidopyrimidine-DNA glycosylase.